A 281-amino-acid polypeptide reads, in one-letter code: Phosphatidylglycerol--prolipoprotein diacylglyceryl transferase (281 aa).

A run of 4 helical transmembrane segments spans residues 23–43, 71–91, 107–127, and 133–153; these read VGPL…MFAW, FVIW…VLFY, WDGG…MILF, and IKVW…LGVV. Arg-154 is an a 1,2-diacyl-sn-glycero-3-phospho-(1'-sn-glycerol) binding site. 3 helical membrane passes run 189–209, 217–237, and 247–267; these read LYEA…LVWV, GFIA…VEFF, and LFGG…LIGL.

The protein belongs to the Lgt family.

The protein localises to the cell inner membrane. It catalyses the reaction L-cysteinyl-[prolipoprotein] + a 1,2-diacyl-sn-glycero-3-phospho-(1'-sn-glycerol) = an S-1,2-diacyl-sn-glyceryl-L-cysteinyl-[prolipoprotein] + sn-glycerol 1-phosphate + H(+). It participates in protein modification; lipoprotein biosynthesis (diacylglyceryl transfer). Its function is as follows. Catalyzes the transfer of the diacylglyceryl group from phosphatidylglycerol to the sulfhydryl group of the N-terminal cysteine of a prolipoprotein, the first step in the formation of mature lipoproteins. The sequence is that of Phosphatidylglycerol--prolipoprotein diacylglyceryl transferase from Brucella anthropi (strain ATCC 49188 / DSM 6882 / CCUG 24695 / JCM 21032 / LMG 3331 / NBRC 15819 / NCTC 12168 / Alc 37) (Ochrobactrum anthropi).